A 446-amino-acid polypeptide reads, in one-letter code: ATP-dependent protease ATPase subunit HslU (446 aa).

ATP is bound by residues V18, 60–65, D259, E324, and R396; that span reads GVGKTE.

This sequence belongs to the ClpX chaperone family. HslU subfamily. As to quaternary structure, a double ring-shaped homohexamer of HslV is capped on each side by a ring-shaped HslU homohexamer. The assembly of the HslU/HslV complex is dependent on binding of ATP.

The protein resides in the cytoplasm. ATPase subunit of a proteasome-like degradation complex; this subunit has chaperone activity. The binding of ATP and its subsequent hydrolysis by HslU are essential for unfolding of protein substrates subsequently hydrolyzed by HslV. HslU recognizes the N-terminal part of its protein substrates and unfolds these before they are guided to HslV for hydrolysis. This chain is ATP-dependent protease ATPase subunit HslU, found in Acidovorax sp. (strain JS42).